The sequence spans 696 residues: Probable E3 ubiquitin ligase complex SCF subunit sconB (696 aa).

A compositionally biased stretch (basic and acidic residues) spans 1 to 12 (MDAHELSFRDGH). The interval 1 to 72 (MDAHELSFRD…HSFNTQKPIR (72 aa)) is disordered. Positions 55–69 (PGSTQDKPHSFNTQK) are enriched in polar residues. The 47-residue stretch at 193-239 (IDFLTALPPEISFKILCYLDTTSLCKAAQVSRRWRALADDDVVWHRM) folds into the F-box domain. Residues 290–314 (SATIETAAAGSKRKPESGKEDTAMV) are disordered. Over residues 302 to 313 (RKPESGKEDTAM) the composition is skewed to basic and acidic residues. WD repeat units follow at residues 365–402 (GHSN…ELRT), 405–444 (GHQS…STYS), 446–482 (HRGG…TCLL), 484–525 (GHTD…RTFH), 579–622 (DTPS…CLRT), 623–662 (FFGH…CERT), and 665–696 (GHSG…SFQT). Residues 554–596 (NVSVTSGDSPAASPQALPGFDGQTSDTPSSAFGPAFDDGRPSP) are disordered.

It belongs to the WD repeat MET30/SCONB/SCON-2 family. As to quaternary structure, component of the SCF(sconB) E3 ubiquitin ligase complex.

It participates in protein modification; protein ubiquitination. Its function is as follows. Component of the SCF(sconB) E3 ubiquitin ligase complex involved in the regulation of sulfur metabolite repression, probably by mediating the inactivation or degradation of the metR transcription factor. The sequence is that of Probable E3 ubiquitin ligase complex SCF subunit sconB (sconB) from Aspergillus fumigatus (strain ATCC MYA-4609 / CBS 101355 / FGSC A1100 / Af293) (Neosartorya fumigata).